The primary structure comprises 187 residues: MVYPVVEAESRVGFGKGFARRARAAGKIPAVAYGLKRAPEHVLLPAAQMSLIMRRANALLQLKIDARESLVLIKQVQRDRIRNIIEHLDMLFVNEDDAVTIRVPLRFVGQSYAGTVTSVENYSVAVTLQVSQIPEALVVDVSGLQAGRRIFASDIALPDGALLVSPPRLLIAKVDPVRRATQESPPD.

The protein belongs to the bacterial ribosomal protein bL25 family. CTC subfamily. In terms of assembly, part of the 50S ribosomal subunit; part of the 5S rRNA/L5/L18/L25 subcomplex. Contacts the 5S rRNA. Binds to the 5S rRNA independently of L5 and L18.

Functionally, this is one of the proteins that binds to the 5S RNA in the ribosome where it forms part of the central protuberance. This is Large ribosomal subunit protein bL25 from Tropheryma whipplei (strain Twist) (Whipple's bacillus).